The sequence spans 91 residues: YcgL domain-containing protein ESA_01460 (91 aa).

The 85-residue stretch at 1-85 folds into the YcgL domain; sequence MFCVIYRSAR…PPENLLKQHL (85 aa).

The sequence is that of YcgL domain-containing protein ESA_01460 from Cronobacter sakazakii (strain ATCC BAA-894) (Enterobacter sakazakii).